The following is a 416-amino-acid chain: Multifunctional CCA protein (416 aa).

G8 and R11 together coordinate ATP. CTP is bound by residues G8 and R11. The Mg(2+) site is built by D21 and D23. ATP is bound by residues R91, R137, and R140. CTP is bound by residues R91, R137, and R140. An HD domain is found at 226 to 327 (TGVHIMLVID…VNLLERCDAF (102 aa)).

The protein belongs to the tRNA nucleotidyltransferase/poly(A) polymerase family. Bacterial CCA-adding enzyme type 1 subfamily. Monomer. Can also form homodimers and oligomers. Mg(2+) is required as a cofactor. Requires Ni(2+) as cofactor.

It carries out the reaction a tRNA precursor + 2 CTP + ATP = a tRNA with a 3' CCA end + 3 diphosphate. The enzyme catalyses a tRNA with a 3' CCA end + 2 CTP + ATP = a tRNA with a 3' CCACCA end + 3 diphosphate. Catalyzes the addition and repair of the essential 3'-terminal CCA sequence in tRNAs without using a nucleic acid template. Adds these three nucleotides in the order of C, C, and A to the tRNA nucleotide-73, using CTP and ATP as substrates and producing inorganic pyrophosphate. tRNA 3'-terminal CCA addition is required both for tRNA processing and repair. Also involved in tRNA surveillance by mediating tandem CCA addition to generate a CCACCA at the 3' terminus of unstable tRNAs. While stable tRNAs receive only 3'-terminal CCA, unstable tRNAs are marked with CCACCA and rapidly degraded. The protein is Multifunctional CCA protein of Janthinobacterium sp. (strain Marseille) (Minibacterium massiliensis).